A 516-amino-acid chain; its full sequence is Homeobox protein 6 (516 aa).

Low complexity predominate over residues 22–31 (NYDFDNKNNS). Disordered stretches follow at residues 22–140 (NYDF…PNCN), 200–256 (SLNN…SSPS), and 268–348 (DEND…NNGD). Gly residues predominate over residues 32 to 41 (IGGGGGGGGS). Composition is skewed to low complexity over residues 42 to 59 (SSSR…SSSG), 66 to 78 (SNSS…IINS), and 101 to 132 (TTTT…NSSS). Positions 284–346 (NNNNNNNNNN…NNNNTNTNNN (63 aa)) are enriched in low complexity. 2 DNA-binding regions (homeobox) span residues 362–421 (KSGQ…SKSG) and 424–483 (SYAK…NKLS). The disordered stretch occupies residues 483 to 516 (SSKAIQDKDNQDNDNNNSNNNENNDDSYSDEGLF). Positions 495–504 (NDNNNSNNNE) are enriched in low complexity. Acidic residues predominate over residues 505–516 (NNDDSYSDEGLF).

It localises to the nucleus. Its function is as follows. Putative transcription factor. This chain is Homeobox protein 6 (hbx6), found in Dictyostelium discoideum (Social amoeba).